Reading from the N-terminus, the 251-residue chain is Tyrosine transport ATP-binding protein (251 aa).

The region spanning 2 to 248 (LQIKNLSKSF…TVEEILEKFE (247 aa)) is the ABC transporter domain. 39–46 (GSNGTGKS) provides a ligand contact to ATP.

The protein belongs to the ABC transporter superfamily. As to quaternary structure, the complex is probably composed of two ATP-binding proteins (CDR20291_0806), two transmembrane proteins (CDR20291_0807) and a solute-binding protein (CDR20291_0805).

The protein localises to the cell membrane. The enzyme catalyses L-tyrosine(out) + ATP + H2O = L-tyrosine(in) + ADP + phosphate + H(+). Probably part of an ABC transporter complex involved in tyrosine uptake. May also import phenylalanine. Probably responsible for energy coupling to the transport system. This is Tyrosine transport ATP-binding protein from Clostridioides difficile (strain R20291) (Peptoclostridium difficile).